Consider the following 403-residue polypeptide: S-adenosylmethionine synthase (403 aa).

His-17 serves as a coordination point for ATP. Position 19 (Asp-19) interacts with Mg(2+). Glu-45 provides a ligand contact to K(+). Residues Glu-58 and Gln-104 each contribute to the L-methionine site. The tract at residues 104 to 114 is flexible loop; that stretch reads QSPDIAQGVDT. ATP contacts are provided by residues 179-181, 250-251, Asp-259, 265-266, Ala-282, and Lys-286; these read DGK, KF, and RK. Position 259 (Asp-259) interacts with L-methionine. Lys-290 serves as a coordination point for L-methionine.

This sequence belongs to the AdoMet synthase family. As to quaternary structure, homotetramer; dimer of dimers. The cofactor is Mg(2+). K(+) is required as a cofactor.

It localises to the cytoplasm. It carries out the reaction L-methionine + ATP + H2O = S-adenosyl-L-methionine + phosphate + diphosphate. It functions in the pathway amino-acid biosynthesis; S-adenosyl-L-methionine biosynthesis; S-adenosyl-L-methionine from L-methionine: step 1/1. Functionally, catalyzes the formation of S-adenosylmethionine (AdoMet) from methionine and ATP. The overall synthetic reaction is composed of two sequential steps, AdoMet formation and the subsequent tripolyphosphate hydrolysis which occurs prior to release of AdoMet from the enzyme. In Mycobacterium ulcerans (strain Agy99), this protein is S-adenosylmethionine synthase.